Here is a 379-residue protein sequence, read N- to C-terminus: F-box protein At1g67340 (379 aa).

Residues 41–92 enclose the F-box domain; that stretch reads ADLLDSIPDDLVISILCKLGSTSRCPADFINVLLTCKRLKGLAMNPIVLSRL. 8 residues coordinate Zn(2+): His304, Cys307, Cys320, Cys323, Cys329, Cys333, His342, and Cys346. Residues 304-346 form an MYND-type; atypical zinc finger; that stretch reads HAGCGRPETRKHEFRRCSVCGVVNYCSRACQALDWKLRHKMDC. Residues 358–379 form a disordered region; it reads GGEGNVQIDGNGNGDNVLLPMS.

Part of a SCF (ASK-cullin-F-box) protein ligase complex. Interacts with SKP1A/ASK1, SKP1B/ASK2, ASK4, ASK11 and ASK13.

It localises to the nucleus. It participates in protein modification; protein ubiquitination. Component of SCF(ASK-cullin-F-box) E3 ubiquitin ligase complexes, which may mediate the ubiquitination and subsequent proteasomal degradation of target proteins. The protein is F-box protein At1g67340 of Arabidopsis thaliana (Mouse-ear cress).